Consider the following 148-residue polypeptide: MPSRLRKTRKLRGHVSHGHGRIGKHRKHPGGRGNAGGMHHHRINFDKYHPGYFGKVGMRHYHLKRNQSFCPTVNLDKLWTLVSEQTRVNAAKNKTGAAPIIDVVRSGYYKVLGKGKLPKQPVIVKAKFFSRRAEEKIKGVGGACVLVA.

Residues 1–30 (MPSRLRKTRKLRGHVSHGHGRIGKHRKHPG) show a composition bias toward basic residues. A disordered region spans residues 1-37 (MPSRLRKTRKLRGHVSHGHGRIGKHRKHPGGRGNAGG). His-39 carries the post-translational modification (3S)-3-hydroxyhistidine. N6-acetyllysine occurs at positions 47 and 55. Phosphoserine is present on Ser-68. Lys-110 carries the N6-acetyllysine modification.

The protein belongs to the universal ribosomal protein uL15 family. As to quaternary structure, component of the large ribosomal subunit. In terms of processing, hydroxylated on His-39 by MINA.

The protein resides in the cytoplasm. Functionally, component of the large ribosomal subunit. The ribosome is a large ribonucleoprotein complex responsible for the synthesis of proteins in the cell. This chain is Large ribosomal subunit protein uL15 (RPL27A), found in Bos taurus (Bovine).